The primary structure comprises 475 residues: Ribulose bisphosphate carboxylase large chain (475 aa).

A propeptide spanning residues 1–2 is cleaved from the precursor; the sequence is MS. Residue Pro3 is modified to N-acetylproline. Residue Lys14 is modified to N6,N6,N6-trimethyllysine. Positions 123 and 173 each coordinate substrate. Lys175 serves as the catalytic Proton acceptor. Lys177 is a binding site for substrate. 3 residues coordinate Mg(2+): Lys201, Asp203, and Glu204. Lys201 is subject to N6-carboxylysine. The active-site Proton acceptor is the His294. Residues Arg295, His327, and Ser379 each coordinate substrate.

Belongs to the RuBisCO large chain family. Type I subfamily. Heterohexadecamer of 8 large chains and 8 small chains; disulfide-linked. The disulfide link is formed within the large subunit homodimers. It depends on Mg(2+) as a cofactor. In terms of processing, the disulfide bond which can form in the large chain dimeric partners within the hexadecamer appears to be associated with oxidative stress and protein turnover.

The protein resides in the plastid. Its subcellular location is the chloroplast. The enzyme catalyses 2 (2R)-3-phosphoglycerate + 2 H(+) = D-ribulose 1,5-bisphosphate + CO2 + H2O. It carries out the reaction D-ribulose 1,5-bisphosphate + O2 = 2-phosphoglycolate + (2R)-3-phosphoglycerate + 2 H(+). Its function is as follows. RuBisCO catalyzes two reactions: the carboxylation of D-ribulose 1,5-bisphosphate, the primary event in carbon dioxide fixation, as well as the oxidative fragmentation of the pentose substrate in the photorespiration process. Both reactions occur simultaneously and in competition at the same active site. The chain is Ribulose bisphosphate carboxylase large chain from Lotus japonicus (Lotus corniculatus var. japonicus).